A 393-amino-acid chain; its full sequence is Large ribosomal subunit protein uL2m (393 aa).

Residues Met-1–Trp-43 constitute a mitochondrion transit peptide. Residues Ala-337–Leu-393 are disordered. Residues Tyr-369–Met-380 are compositionally biased toward basic residues. Over residues Lys-381–Leu-393 the composition is skewed to basic and acidic residues.

This sequence belongs to the universal ribosomal protein uL2 family. In terms of assembly, component of the mitochondrial large ribosomal subunit (mt-LSU). Mature yeast 74S mitochondrial ribosomes consist of a small (37S) and a large (54S) subunit. The 37S small subunit contains a 15S ribosomal RNA (15S mt-rRNA) and 34 different proteins. The 54S large subunit contains a 21S rRNA (21S mt-rRNA) and 46 different proteins. uL2m has a Na/K ligand binding site.

The protein localises to the mitochondrion. In terms of biological role, component of the mitochondrial ribosome (mitoribosome), a dedicated translation machinery responsible for the synthesis of mitochondrial genome-encoded proteins, including at least some of the essential transmembrane subunits of the mitochondrial respiratory chain. The mitoribosomes are attached to the mitochondrial inner membrane and translation products are cotranslationally integrated into the membrane. In Saccharomyces cerevisiae (strain ATCC 204508 / S288c) (Baker's yeast), this protein is Large ribosomal subunit protein uL2m (RML2).